Reading from the N-terminus, the 290-residue chain is Glycine-N-acyltransferase-like protein 3 (290 aa).

The catalysed reaction is an acyl-CoA + glycine = an N-acylglycine + CoA + H(+). It catalyses the reaction (9Z)-octadecenoyl-CoA + glycine = N-(9Z-octadecenoyl)glycine + CoA + H(+). It carries out the reaction hexadecanoyl-CoA + glycine = N-hexadecanoylglycine + CoA + H(+). It functions in the pathway lipid metabolism. Catalyzes the conjugation of long-chain fatty acyl-CoA thioester and glycine to produce long-chain N-(fatty acyl)glycine, an intermediate in the primary fatty acid amide biosynthetic pathway. In Mus musculus (Mouse), this protein is Glycine-N-acyltransferase-like protein 3.